A 422-amino-acid polypeptide reads, in one-letter code: Trigger factor (422 aa).

Residues 158 to 242 enclose the PPIase FKBP-type domain; that stretch reads GDFAVVSLES…VKGLRKKELP (85 aa).

It belongs to the FKBP-type PPIase family. Tig subfamily.

It is found in the cytoplasm. The enzyme catalyses [protein]-peptidylproline (omega=180) = [protein]-peptidylproline (omega=0). Its function is as follows. Involved in protein export. Acts as a chaperone by maintaining the newly synthesized protein in an open conformation. Functions as a peptidyl-prolyl cis-trans isomerase. This is Trigger factor from Solibacter usitatus (strain Ellin6076).